A 500-amino-acid polypeptide reads, in one-letter code: Probable cytosol aminopeptidase (500 aa).

Lys262 and Asp267 together coordinate Mn(2+). The active site involves Lys274. Residues Asp285, Asp344, and Glu346 each coordinate Mn(2+). Residue Arg348 is part of the active site.

It belongs to the peptidase M17 family. Mn(2+) is required as a cofactor.

Its subcellular location is the cytoplasm. It catalyses the reaction Release of an N-terminal amino acid, Xaa-|-Yaa-, in which Xaa is preferably Leu, but may be other amino acids including Pro although not Arg or Lys, and Yaa may be Pro. Amino acid amides and methyl esters are also readily hydrolyzed, but rates on arylamides are exceedingly low.. The catalysed reaction is Release of an N-terminal amino acid, preferentially leucine, but not glutamic or aspartic acids.. In terms of biological role, presumably involved in the processing and regular turnover of intracellular proteins. Catalyzes the removal of unsubstituted N-terminal amino acids from various peptides. The chain is Probable cytosol aminopeptidase from Ehrlichia ruminantium (strain Welgevonden).